A 446-amino-acid chain; its full sequence is MENISDLWNSALKELEKKVSKPSYETWLKSTTAHNLKKDVLTITAPNEFARDWLESHYSELISETLYDLTGAKLAIRFIIPQSQAEEEIDLPPSKPNSAQDDSNHLPQSMLNPKYTFDTFVIGSGNRFAHAASLAVAEAPAKAYNPLFIYGGVGLGKTHLMHAIGHYVIEHNPNAKVVYLSSEKFTNEFINSIRDNKAVDFRNKYRNVDVLLIDDIQFLAGKEQTQEEFFHTFNALHEESKQIVISSDRPPKEIPTLEDRLRSRFEWGLITDITPPDLETRIAILRKKAKAEGLDIPNEVMLYIANQIDSNIRELEGALIRVVAYSSLINKDINADLAAEALKDIIPNSKPKIISIYDIQKAVGDVYQVKLEDFKAKKRTKSVAFPRQIAMYLSRELTDSSLPKIGEEFGGRDHTTVIHAHEKISKLLKTDTQLQKQVEEINDILK.

Residues 1–92 (MENISDLWNS…SQAEEEIDLP (92 aa)) form a domain I, interacts with DnaA modulators region. Residues 87–107 (EEIDLPPSKPNSAQDDSNHLP) form a disordered region. Residues 93 to 109 (PSKPNSAQDDSNHLPQS) form a domain II region. Positions 96 to 107 (PNSAQDDSNHLP) are enriched in polar residues. Positions 110–326 (MLNPKYTFDT…GALIRVVAYS (217 aa)) are domain III, AAA+ region. Glycine 154, glycine 156, lysine 157, and threonine 158 together coordinate ATP. Positions 327 to 446 (SLINKDINAD…QVEEINDILK (120 aa)) are domain IV, binds dsDNA.

The protein belongs to the DnaA family. As to quaternary structure, oligomerizes as a right-handed, spiral filament on DNA at oriC.

It localises to the cytoplasm. In terms of biological role, plays an essential role in the initiation and regulation of chromosomal replication. ATP-DnaA binds to the origin of replication (oriC) to initiate formation of the DNA replication initiation complex once per cell cycle. Binds the DnaA box (a 9 base pair repeat at the origin) and separates the double-stranded (ds)DNA. Forms a right-handed helical filament on oriC DNA; dsDNA binds to the exterior of the filament while single-stranded (ss)DNA is stabiized in the filament's interior. The ATP-DnaA-oriC complex binds and stabilizes one strand of the AT-rich DNA unwinding element (DUE), permitting loading of DNA polymerase. After initiation quickly degrades to an ADP-DnaA complex that is not apt for DNA replication. Binds acidic phospholipids. The sequence is that of Chromosomal replication initiator protein DnaA from Bacillus cereus (strain ATCC 10987 / NRS 248).